A 439-amino-acid polypeptide reads, in one-letter code: MAAAAPDKAVERLSQKLVHPSSPTPSAPLRLSWLDRYPTQMALIESLHVFKPDPARDAAGQGLAPARAIETALARALVEYYPLAGRLAVSRDSGELQVDCCGGAGGHGGVWFIEAAVPCRLEDVDYLEYPLAISKDELLPHPRPRPTRDEEDKLILLVQVTTFACGGFVVGFRFSHAVADGPGAAQFMGAVGELARGGERITVAPSWGRDAVPDPAGAMVGALPEPAGASRLEYLAIDISADYINHFKSQFAAATGGARCSAFEVLIAKAWQSRTRAAAFDPSTPINLSFAMNARPLLLPRGGAGFYGNCYYIMRVASTAGRVATASVTDVVRMIREGKKRLPSEFARWAAGEMAGVDPYQITSDYRTLLVSDWTRLGFAEVDYGWGPPGHVVPLTNLDYIATCILVKPWAHKPGARLITQCVTPDRVTAFHDAMVDIN.

Positions 1-25 (MAAAAPDKAVERLSQKLVHPSSPTP) are disordered. Catalysis depends on proton acceptor residues His-176 and Asp-383.

The protein belongs to the plant acyltransferase family.

Its function is as follows. Involved in the incorporation of ferulate into the cell wall. May act as arabinoxylan feruloyl transferase. The chain is Acyl transferase 7 from Oryza sativa subsp. japonica (Rice).